Consider the following 193-residue polypeptide: Protein GrpE (193 aa).

Residues 1–40 (MTEENRPQPDQPELTVTSESSVQETGENKARTPEQEGEAM) form a disordered region. Positions 14-25 (LTVTSESSVQET) are enriched in polar residues.

Belongs to the GrpE family. In terms of assembly, homodimer.

The protein resides in the cytoplasm. In terms of biological role, participates actively in the response to hyperosmotic and heat shock by preventing the aggregation of stress-denatured proteins, in association with DnaK and GrpE. It is the nucleotide exchange factor for DnaK and may function as a thermosensor. Unfolded proteins bind initially to DnaJ; upon interaction with the DnaJ-bound protein, DnaK hydrolyzes its bound ATP, resulting in the formation of a stable complex. GrpE releases ADP from DnaK; ATP binding to DnaK triggers the release of the substrate protein, thus completing the reaction cycle. Several rounds of ATP-dependent interactions between DnaJ, DnaK and GrpE are required for fully efficient folding. In Nitrosospira multiformis (strain ATCC 25196 / NCIMB 11849 / C 71), this protein is Protein GrpE.